Consider the following 257-residue polypeptide: Small ribosomal subunit protein uS2 (257 aa).

This sequence belongs to the universal ribosomal protein uS2 family.

This Ruegeria pomeroyi (strain ATCC 700808 / DSM 15171 / DSS-3) (Silicibacter pomeroyi) protein is Small ribosomal subunit protein uS2.